A 185-amino-acid polypeptide reads, in one-letter code: MTKEVIADMKAHMEKSVDALRREYQKVRTGRATTGLLDDIKVEYYGNPSPLSQVATLSVPEPRTITIQPWEAKLIPVIEKAIMNANLGFTPANDGKTIRISLPPLTEERRKEIVKTLKKMAEDTKVAVRNIRRDGIDSLKKLEKDKKISEDDLKRAEKEVQDVTNTFVAKVEEVLTHKEKEVLEV.

The protein belongs to the RRF family.

Its subcellular location is the cytoplasm. Its function is as follows. Responsible for the release of ribosomes from messenger RNA at the termination of protein biosynthesis. May increase the efficiency of translation by recycling ribosomes from one round of translation to another. The polypeptide is Ribosome-recycling factor (Geobacter metallireducens (strain ATCC 53774 / DSM 7210 / GS-15)).